The sequence spans 606 residues: MRNKTCGELRASAISANVQLCGWVDRRRDHGGVIFIDLRDRSGTIQITVDPDQGQDLFSIAESLRNETVLQINGLVRARPDEAINTKIPTGEVEVLAKNIKILNTVTSTLPFSVSIHDEESVKEEIRLKHRYLDLRRERMNNNLRLRHNTVKAARSFLENEGFIEVETPILTRSTPEGARDYLVPSRVCGGEFFALPQSPQLFKQLLMVGGVERYYQVARCFRDEDLRADRQPEFTQLDIEMSFMEEKEIIELNEKLIVSIWKKIKGIDLQTPFPRMTWQEAMDRFGTDRPDTRYGMELVNTSDLFSKSGFKVFSNAISSGGCVKCITIEDGNNLISNVRIKPGGDIFSEAQKAGAGGLAFIRVRDDKEVDTIGAIKDNLTTSQIKELLLKTQAKPGDLILFGAGPTNIVNRTLDRVRQFIAKDLKIISDNELKTQWNFLWVTDFPMFEFNSDENRLEAIHHPFCAPKPEDIGESESLWKDKLPNSNAQAYDLVLNGLEIGGGSLRIHNSELQKTVLEVIGLSKNEAEEQFGFLIDALAMGAPPHGGIAFGLDRIVMLLANEDSIRDTIAFPKTQQARCSMAKAPANVENKQLEDLHIASTWIDPD.

Glu-177 provides a ligand contact to L-aspartate. Positions Gln-201 to Lys-204 are aspartate. Arg-223 lines the L-aspartate pocket. Residues Arg-223–Glu-225 and Gln-232 contribute to the ATP site. His-461 serves as a coordination point for L-aspartate. Glu-499 serves as a coordination point for ATP. L-aspartate is bound at residue Arg-506. Residue Gly-551–Arg-554 participates in ATP binding.

This sequence belongs to the class-II aminoacyl-tRNA synthetase family. Type 1 subfamily. Homodimer.

The protein resides in the cytoplasm. The catalysed reaction is tRNA(Asx) + L-aspartate + ATP = L-aspartyl-tRNA(Asx) + AMP + diphosphate. Functionally, aspartyl-tRNA synthetase with relaxed tRNA specificity since it is able to aspartylate not only its cognate tRNA(Asp) but also tRNA(Asn). Reaction proceeds in two steps: L-aspartate is first activated by ATP to form Asp-AMP and then transferred to the acceptor end of tRNA(Asp/Asn). The polypeptide is Aspartate--tRNA(Asp/Asn) ligase (Prochlorococcus marinus (strain NATL2A)).